Reading from the N-terminus, the 138-residue chain is Large ribosomal subunit protein eL32 (138 aa).

Belongs to the eukaryotic ribosomal protein eL32 family.

The polypeptide is Large ribosomal subunit protein eL32 (Saccharolobus islandicus (strain Y.N.15.51 / Yellowstone #2) (Sulfolobus islandicus)).